A 171-amino-acid polypeptide reads, in one-letter code: Cardioactive peptide (171 aa).

The first 26 residues, 1–26 (MQMYHVVLGCSLAILLVILDIPQASC), serve as a signal peptide directing secretion. The propeptide occupies 27 to 49 (DDVVIQKRQVDPAEMDRLLDPKR). A disulfide bridge links Cys54 with Cys60. Cys60 carries the post-translational modification Cysteine amide. A propeptide spanning residues 64-171 (RSDESMGTLV…QEEITKPWSR (108 aa)) is cleaved from the precursor. Positions 116–171 (QSNQFGAGMDRPLPLPIAGYRRKRFADPESQAPAPHSNLPRATSQLQEEITKPWSR) are disordered.

In terms of tissue distribution, central nervous system; most neurons exhibit coexpression with burs.

Its subcellular location is the secreted. Its function is as follows. Cardioregulatory neurohormone that increases heart beat rate during adult wing inflation; has no effect on beat amplitude. The effect of CCAP is both ino- and chronotropic. The protein is Cardioactive peptide of Periplaneta americana (American cockroach).